Consider the following 400-residue polypeptide: Large envelope protein (400 aa).

At Met-1 the chain carries N-acetylmethionine. Disordered stretches follow at residues 1–53 (MGGW…DHWP), 88–118 (VPVA…SHPQ), and 145–169 (GSSS…SRTG). The N-myristoyl glycine; by host moiety is linked to residue Gly-2. Residues 2-119 (GGWSSKPRQG…PPLRDSHPQA (118 aa)) form a pre-S1 region. The interval 2–174 (GGWSSKPRQG…SSRTGDPAPN (173 aa)) is pre-S. Residues 2–181 (GGWSSKPRQG…APNMENTTSG (180 aa)) are Virion surface; in external conformation-facing. Residues 2–253 (GGWSSKPRQG…PGYRWMCLRR (252 aa)) are Intravirion; in internal conformation-facing. Trp-4 carries N-linked (GlcNAc...) asparagine glycosylation. The span at 96–106 (STNRQSGRQPT) shows a compositional bias: polar residues. Positions 120–174 (MQWNSTTFHQALLDPRVRGLYFPAGGSSSGTVNPVPTTASPISSISSRTGDPAPN) are pre-S2. Residues 155 to 166 (PTTASPISSISS) show a composition bias toward low complexity. The helical transmembrane segment at 182–202 (FLGPLLVLQAGFFLLTRILTI) threads the bilayer. Topologically, residues 203–253 (PQSLDSWWTSLNFLGGAPTCPGQNSQSPTSNHSPTSCPPICPGYRWMCLRR) are intravirion; in external conformation. A helical transmembrane segment spans residues 254–274 (FIIFLFILLLCLIFLLVLLDY). The Virion surface segment spans residues 275 to 348 (QGMLPVCPLL…GASVRFSWLS (74 aa)). Asn-320 carries N-linked (GlcNAc...) asparagine; by host glycosylation. The helical transmembrane segment at 349-369 (LLVPFVQWFVGLSPTVWLSVI) threads the bilayer. The Intravirion portion of the chain corresponds to 370-375 (WMMWYW). A helical transmembrane segment spans residues 376–398 (GPSLYNILSPFLPLLPIFFCLWV). The Virion surface portion of the chain corresponds to 399 to 400 (YI).

This sequence belongs to the orthohepadnavirus major surface antigen family. In terms of assembly, in its internal form (Li-HBsAg), interacts with the capsid protein and with the isoform S. Interacts with host chaperone CANX. Associates with host chaperone CANX through its pre-S2 N glycan; this association may be essential for isoform M proper secretion. As to quaternary structure, interacts with isoform L. Interacts with the antigens of satellite virus HDV (HDVAgs); this interaction is required for encapsidation of HDV genomic RNA. Isoform M is N-terminally acetylated by host at a ratio of 90%, and N-glycosylated by host at the pre-S2 region. Post-translationally, myristoylated.

The protein localises to the virion membrane. Functionally, the large envelope protein exists in two topological conformations, one which is termed 'external' or Le-HBsAg and the other 'internal' or Li-HBsAg. In its external conformation the protein attaches the virus to cell receptors and thereby initiating infection. This interaction determines the species specificity and liver tropism. This attachment induces virion internalization predominantly through caveolin-mediated endocytosis. The large envelope protein also assures fusion between virion membrane and endosomal membrane. In its internal conformation the protein plays a role in virion morphogenesis and mediates the contact with the nucleocapsid like a matrix protein. The middle envelope protein plays an important role in the budding of the virion. It is involved in the induction of budding in a nucleocapsid independent way. In this process the majority of envelope proteins bud to form subviral lipoprotein particles of 22 nm of diameter that do not contain a nucleocapsid. This chain is Large envelope protein, found in Hepatitis B virus genotype C subtype adr (strain Japan/adr4/1983) (HBV-C).